The chain runs to 201 residues: Urease accessory protein UreG (201 aa).

11–18 (GPVGSGKT) contributes to the GTP binding site.

This sequence belongs to the SIMIBI class G3E GTPase family. UreG subfamily. Homodimer. UreD, UreF and UreG form a complex that acts as a GTP-hydrolysis-dependent molecular chaperone, activating the urease apoprotein by helping to assemble the nickel containing metallocenter of UreC. The UreE protein probably delivers the nickel.

The protein localises to the cytoplasm. Facilitates the functional incorporation of the urease nickel metallocenter. This process requires GTP hydrolysis, probably effectuated by UreG. The protein is Urease accessory protein UreG of Prochlorococcus marinus subsp. pastoris (strain CCMP1986 / NIES-2087 / MED4).